The primary structure comprises 679 residues: UvrABC system protein B (679 aa).

The region spanning 25 to 412 (QGVNSGEEFQ…EGKFIEQVIR (388 aa)) is the Helicase ATP-binding domain. Position 38–45 (38–45 (GATGTGKT)) interacts with ATP. Positions 91-114 (YYDYYQPEAYVPVSDTYIAKTASI) match the Beta-hairpin motif. The Helicase C-terminal domain maps to 429-583 (QIDDLLSEIR…KKYNQINGIT (155 aa)). A UVR domain is found at 639–674 (PSLIDKLENKMKDAAKELNFEEAANLRDRIKKLRQK).

Belongs to the UvrB family. As to quaternary structure, forms a heterotetramer with UvrA during the search for lesions. Interacts with UvrC in an incision complex.

It localises to the cytoplasm. Its function is as follows. The UvrABC repair system catalyzes the recognition and processing of DNA lesions. A damage recognition complex composed of 2 UvrA and 2 UvrB subunits scans DNA for abnormalities. Upon binding of the UvrA(2)B(2) complex to a putative damaged site, the DNA wraps around one UvrB monomer. DNA wrap is dependent on ATP binding by UvrB and probably causes local melting of the DNA helix, facilitating insertion of UvrB beta-hairpin between the DNA strands. Then UvrB probes one DNA strand for the presence of a lesion. If a lesion is found the UvrA subunits dissociate and the UvrB-DNA preincision complex is formed. This complex is subsequently bound by UvrC and the second UvrB is released. If no lesion is found, the DNA wraps around the other UvrB subunit that will check the other stand for damage. The sequence is that of UvrABC system protein B from Prochlorococcus marinus subsp. pastoris (strain CCMP1986 / NIES-2087 / MED4).